The sequence spans 356 residues: MNILNVVRRFEFQLFLVNVIIALFFYFENSAYFSSNNITTIFQYLAEIGIIAIGEAMLMLCGEIDLSPPALANFVPLITLTIYNSIYQAISPTPAIVVSILLSLGLASLIGLMNGLITTKAKVNSLITTVGTLFLFNGIALIYSGGYPESFPYFRFLGGTVSILPVPFIWSLGALVFLILLLHYTKIGVWTIAAGSNPTGASEVGVPVDRVKIINFIIMANIGALVGIIQGSRVLTIGATNFTADVVLEGIAAAVIGGTSLVGGKGSLVGAFLGSVFISELLNGFNILGINAYEFDAILGGAIVVVMVLSYYAKRASYKLKSIATATSSSPEGKDRITKILKFKIQKIYRRVEENE.

The next 10 membrane-spanning stretches (helical) occupy residues 14-34, 41-61, 70-90, 96-116, 126-146, 161-181, 211-231, 242-262, 266-286, and 287-307; these read LFLVNVIIALFFYFENSAYFS, IFQYLAEIGIIAIGEAMLMLC, ALANFVPLITLTIYNSIYQAI, IVVSILLSLGLASLIGLMNGL, LITTVGTLFLFNGIALIYSGG, VSILPVPFIWSLGALVFLILL, VKIINFIIMANIGALVGIIQG, FTADVVLEGIAAAVIGGTSLV, GSLVGAFLGSVFISELLNGFN, and ILGINAYEFDAILGGAIVVVM.

This sequence belongs to the binding-protein-dependent transport system permease family. As to quaternary structure, the complex is composed of two ATP-binding proteins (XylG), two transmembrane proteins (XylH) and a solute-binding protein (XylF).

It is found in the cell membrane. Functionally, part of the ABC transporter complex XylFGH involved in the uptake of xylose and arabinose. Responsible for the translocation of the substrate across the membrane. This Sulfolobus acidocaldarius (strain ATCC 33909 / DSM 639 / JCM 8929 / NBRC 15157 / NCIMB 11770) protein is Xylose/arabinose import permease protein XylH.